Here is a 788-residue protein sequence, read N- to C-terminus: Endonuclease MutS2 (788 aa).

Residue Gly332–Thr339 coordinates ATP. Residues Ile713–Lys788 form the Smr domain.

This sequence belongs to the DNA mismatch repair MutS family. MutS2 subfamily. Homodimer. Binds to stalled ribosomes, contacting rRNA.

Functionally, endonuclease that is involved in the suppression of homologous recombination and thus may have a key role in the control of bacterial genetic diversity. Acts as a ribosome collision sensor, splitting the ribosome into its 2 subunits. Detects stalled/collided 70S ribosomes which it binds and splits by an ATP-hydrolysis driven conformational change. Acts upstream of the ribosome quality control system (RQC), a ribosome-associated complex that mediates the extraction of incompletely synthesized nascent chains from stalled ribosomes and their subsequent degradation. Probably generates substrates for RQC. The chain is Endonuclease MutS2 from Clostridium acetobutylicum (strain ATCC 824 / DSM 792 / JCM 1419 / IAM 19013 / LMG 5710 / NBRC 13948 / NRRL B-527 / VKM B-1787 / 2291 / W).